Reading from the N-terminus, the 414-residue chain is 3-phosphoshikimate 1-carboxyvinyltransferase (414 aa).

Lys-20, Ser-21, and Arg-25 together coordinate 3-phosphoshikimate. Lys-20 serves as a coordination point for phosphoenolpyruvate. Arg-113 is a binding site for phosphoenolpyruvate. 6 residues coordinate 3-phosphoshikimate: Ser-154, Ser-155, Gln-156, Ser-181, Asp-296, and Lys-323. Gln-156 lines the phosphoenolpyruvate pocket. The active-site Proton acceptor is Asp-296. Phosphoenolpyruvate is bound by residues Arg-327, Arg-371, and Lys-395.

This sequence belongs to the EPSP synthase family. Monomer.

Its subcellular location is the cytoplasm. It carries out the reaction 3-phosphoshikimate + phosphoenolpyruvate = 5-O-(1-carboxyvinyl)-3-phosphoshikimate + phosphate. It functions in the pathway metabolic intermediate biosynthesis; chorismate biosynthesis. Functionally, catalyzes the transfer of the enolpyruvyl moiety of phosphoenolpyruvate (PEP) to the 5-hydroxyl of shikimate-3-phosphate (S3P) to produce enolpyruvyl shikimate-3-phosphate and inorganic phosphate. This Saccharolobus solfataricus (strain ATCC 35092 / DSM 1617 / JCM 11322 / P2) (Sulfolobus solfataricus) protein is 3-phosphoshikimate 1-carboxyvinyltransferase.